The sequence spans 330 residues: MTPDWHSSLILTAYILIFLTGLPANLLALRAFVSRVRQPQPAPVHILLLNLTLADLLLLLLLPFRIVEAASNFRWYLPKIVCALTGFGFYSSIYCSTWLLAGISIERYLGVAFPVQYKLSRRPLYGVIAALVAWIMSFGHCTIVIIVQYLNSTEQVGTENQITCYENFTQAQLDVVLPVRLELCLVLFFVPMTVTIFCYWRFVWIMLTQPHVGAQRRRRAVGLAVVTLLNFLVCFGPYNMSHLVGFHLRQSPSWRVEAVVFSSLNASLDPLLFYFSSSVVRRAFGKGLLLLRNPGSSMLGRGAEETVEGTKTDRGGSQTEGAQSSDFVTE.

The Extracellular segment spans residues 1 to 8 (MTPDWHSS). The helical transmembrane segment at 9–29 (LILTAYILIFLTGLPANLLAL) threads the bilayer. Residues 30-43 (RAFVSRVRQPQPAP) lie on the Cytoplasmic side of the membrane. A helical transmembrane segment spans residues 44-64 (VHILLLNLTLADLLLLLLLPF). Residues 65–79 (RIVEAASNFRWYLPK) lie on the Extracellular side of the membrane. Residues 80-100 (IVCALTGFGFYSSIYCSTWLL) traverse the membrane as a helical segment. Topologically, residues 101 to 126 (AGISIERYLGVAFPVQYKLSRRPLYG) are cytoplasmic. A helical membrane pass occupies residues 127-147 (VIAALVAWIMSFGHCTIVIIV). Residues 148–184 (QYLNSTEQVGTENQITCYENFTQAQLDVVLPVRLELC) lie on the Extracellular side of the membrane. N-linked (GlcNAc...) asparagine glycans are attached at residues N151 and N167. Residues 185–205 (LVLFFVPMTVTIFCYWRFVWI) traverse the membrane as a helical segment. Residues 206 to 219 (MLTQPHVGAQRRRR) lie on the Cytoplasmic side of the membrane. The helical transmembrane segment at 220–240 (AVGLAVVTLLNFLVCFGPYNM) threads the bilayer. The Extracellular portion of the chain corresponds to 241–255 (SHLVGFHLRQSPSWR). The chain crosses the membrane as a helical span at residues 256–276 (VEAVVFSSLNASLDPLLFYFS). The Cytoplasmic portion of the chain corresponds to 277-330 (SSVVRRAFGKGLLLLRNPGSSMLGRGAEETVEGTKTDRGGSQTEGAQSSDFVTE). Positions 300–330 (GRGAEETVEGTKTDRGGSQTEGAQSSDFVTE) are disordered. Residues 302–314 (GAEETVEGTKTDR) show a composition bias toward basic and acidic residues. Residues 315-330 (GGSQTEGAQSSDFVTE) show a composition bias toward polar residues.

Belongs to the G-protein coupled receptor 1 family. Interacts with FCN1 (via Fibrinogen C-terminal domain). In terms of tissue distribution, detected in whole wall and separated mucosa in the distal ileum and colon. Expressed by enteroendocrine cells expressing peptide YY (PYY) (at protein level).

Its subcellular location is the cell membrane. Its function is as follows. G protein-coupled receptor that is activated by a major product of dietary fiber digestion, the short chain fatty acids (SCFAs), and that plays a role in the regulation of whole-body energy homeostasis and in intestinal immunity. In omnivorous mammals, the short chain fatty acids acetate, propionate and butyrate are produced primarily by the gut microbiome that metabolizes dietary fibers. SCFAs serve as a source of energy but also act as signaling molecules. That G protein-coupled receptor is probably coupled to the pertussis toxin-sensitive, G(i/o)-alpha family of G proteins but also to the Gq family. Its activation results in the formation of inositol 1,4,5-trisphosphate, the mobilization of intracellular calcium, the phosphorylation of the MAPK3/ERK1 and MAPK1/ERK2 kinases and the inhibition of intracellular cAMP accumulation. May play a role in glucose homeostasis by regulating the secretion of GLP-1, in response to short-chain fatty acids accumulating in the intestine. May also regulate the production of LEP/Leptin, a hormone acting on the central nervous system to inhibit food intake. Finally, may also regulate whole-body energy homeostasis through adipogenesis regulating both differentiation and lipid storage of adipocytes. In parallel to its role in energy homeostasis, may also mediate the activation of the inflammatory and immune responses by SCFA in the intestine, regulating the rapid production of chemokines and cytokines. May also play a role in the resolution of the inflammatory response and control chemotaxis in neutrophils. In addition to SCFAs, may also be activated by the extracellular lectin FCN1 in a process leading to activation of monocytes and inducing the secretion of interleukin-8/IL-8 in response to the presence of microbes. This chain is Free fatty acid receptor 2 (Ffar2), found in Rattus norvegicus (Rat).